A 54-amino-acid chain; its full sequence is VATVDCSDYPRPDCTLEYMPLCGSDNKTYGNKCNFCNAVVDSNGTLTLSHFGKC.

One can recognise a Kazal-like domain in the interval 4 to 54; it reads VDCSDYPRPDCTLEYMPLCGSDNKTYGNKCNFCNAVVDSNGTLTLSHFGKC. Disulfide bonds link C6/C36, C14/C33, and C22/C54. Residue N43 is glycosylated (N-linked (GlcNAc...) asparagine).

Its subcellular location is the secreted. This Dendrocygna eytoni (Plumed whistling-duck) protein is Ovomucoid.